Consider the following 1069-residue polypeptide: Carbamoyl phosphate synthase large chain (1069 aa).

Positions 1-401 are carboxyphosphate synthetic domain; it reads MPLNKDIKRV…AFLKGIRSLE (401 aa). ATP is bound by residues Arg129, Arg169, Gly175, Gly176, Lys208, Val210, Glu215, Gly241, Ile242, His243, Gln284, and Glu298. Positions 133-327 constitute an ATP-grasp 1 domain; sequence RDMMNRIGEP…IAKLAAKIAL (195 aa). 3 residues coordinate Mg(2+): Gln284, Glu298, and Asn300. 3 residues coordinate Mn(2+): Gln284, Glu298, and Asn300. The tract at residues 402-549 is oligomerization domain; sequence IGKYSLDHKK…YSTYEQYDEV (148 aa). Residues 550 to 932 form a carbamoyl phosphate synthetic domain region; that stretch reads EVSNRRKVIV…ALYKGFVGAN (383 aa). An ATP-grasp 2 domain is found at 674-864; that stretch reads DELLERLDIS…IVDIATQVML (191 aa). The ATP site is built by Arg710, Lys749, Leu751, Glu755, Gly780, Val781, His782, Ser783, Gln823, and Glu835. 3 residues coordinate Mg(2+): Gln823, Glu835, and Asn837. Gln823, Glu835, and Asn837 together coordinate Mn(2+). The 138-residue stretch at 932 to 1069 folds into the MGS-like domain; sequence NMYPSKEKGK…KDLEVFDITK (138 aa). An allosteric domain region spans residues 933 to 1069; sequence MYPSKEKGKI…KDLEVFDITK (137 aa).

This sequence belongs to the CarB family. In terms of assembly, composed of two chains; the small (or glutamine) chain promotes the hydrolysis of glutamine to ammonia, which is used by the large (or ammonia) chain to synthesize carbamoyl phosphate. Tetramer of heterodimers (alpha,beta)4. Mg(2+) serves as cofactor. Requires Mn(2+) as cofactor.

It carries out the reaction hydrogencarbonate + L-glutamine + 2 ATP + H2O = carbamoyl phosphate + L-glutamate + 2 ADP + phosphate + 2 H(+). It catalyses the reaction hydrogencarbonate + NH4(+) + 2 ATP = carbamoyl phosphate + 2 ADP + phosphate + 2 H(+). Its pathway is amino-acid biosynthesis; L-arginine biosynthesis; carbamoyl phosphate from bicarbonate: step 1/1. It participates in pyrimidine metabolism; UMP biosynthesis via de novo pathway; (S)-dihydroorotate from bicarbonate: step 1/3. Large subunit of the glutamine-dependent carbamoyl phosphate synthetase (CPSase). CPSase catalyzes the formation of carbamoyl phosphate from the ammonia moiety of glutamine, carbonate, and phosphate donated by ATP, constituting the first step of 2 biosynthetic pathways, one leading to arginine and/or urea and the other to pyrimidine nucleotides. The large subunit (synthetase) binds the substrates ammonia (free or transferred from glutamine from the small subunit), hydrogencarbonate and ATP and carries out an ATP-coupled ligase reaction, activating hydrogencarbonate by forming carboxy phosphate which reacts with ammonia to form carbamoyl phosphate. The sequence is that of Carbamoyl phosphate synthase large chain from Clostridium botulinum (strain Alaska E43 / Type E3).